A 79-amino-acid polypeptide reads, in one-letter code: Acyl carrier protein (79 aa).

Positions 6–79 (KEILDGLAEI…VQDVINYIQK (74 aa)) constitute a Carrier domain. Ser-41 carries the post-translational modification O-(pantetheine 4'-phosphoryl)serine.

This sequence belongs to the acyl carrier protein (ACP) family. Post-translationally, 4'-phosphopantetheine is transferred from CoA to a specific serine of apo-ACP by AcpS. This modification is essential for activity because fatty acids are bound in thioester linkage to the sulfhydryl of the prosthetic group.

The protein localises to the cytoplasm. The protein operates within lipid metabolism; fatty acid biosynthesis. In terms of biological role, carrier of the growing fatty acid chain in fatty acid biosynthesis. The protein is Acyl carrier protein of Thermobifida fusca (strain YX).